Consider the following 130-residue polypeptide: Neelaredoxin (130 aa).

The Fe cation site is built by Glu-15, His-17, His-45, His-51, Cys-115, and His-118.

Belongs to the desulfoferrodoxin family. In terms of assembly, monomer. It depends on Fe cation as a cofactor.

It catalyses the reaction 2 superoxide + 2 H(+) = H2O2 + O2. Its function is as follows. Non-heme iron protein. This is Neelaredoxin (nlr) from Megalodesulfovibrio gigas (Desulfovibrio gigas).